Consider the following 307-residue polypeptide: Oxygen-dependent coproporphyrinogen-III oxidase (307 aa).

Position 99 (serine 99) interacts with substrate. Residues histidine 103 and histidine 113 each contribute to the a divalent metal cation site. Histidine 113 functions as the Proton donor in the catalytic mechanism. 115–117 (NVR) contacts substrate. Residues histidine 152 and histidine 182 each coordinate a divalent metal cation. The important for dimerization stretch occupies residues 247-282 (YVEFNLVFDRGTLFGLQSGGRTESILLSMPPTAGWR). Substrate is bound at residue 265–267 (GGR).

The protein belongs to the aerobic coproporphyrinogen-III oxidase family. Homodimer. A divalent metal cation serves as cofactor.

Its subcellular location is the cytoplasm. The catalysed reaction is coproporphyrinogen III + O2 + 2 H(+) = protoporphyrinogen IX + 2 CO2 + 2 H2O. It participates in porphyrin-containing compound metabolism; protoporphyrin-IX biosynthesis; protoporphyrinogen-IX from coproporphyrinogen-III (O2 route): step 1/1. Its function is as follows. Involved in the heme biosynthesis. Catalyzes the aerobic oxidative decarboxylation of propionate groups of rings A and B of coproporphyrinogen-III to yield the vinyl groups in protoporphyrinogen-IX. This is Oxygen-dependent coproporphyrinogen-III oxidase from Burkholderia pseudomallei (strain 1106a).